The chain runs to 444 residues: Phosphoglucosamine mutase (444 aa).

S101 (phosphoserine intermediate) is an active-site residue. Mg(2+) contacts are provided by S101, D240, D242, and D244. Residue S101 is modified to Phosphoserine.

The protein belongs to the phosphohexose mutase family. It depends on Mg(2+) as a cofactor. In terms of processing, activated by phosphorylation.

The catalysed reaction is alpha-D-glucosamine 1-phosphate = D-glucosamine 6-phosphate. Its function is as follows. Catalyzes the conversion of glucosamine-6-phosphate to glucosamine-1-phosphate. This chain is Phosphoglucosamine mutase, found in Sphingopyxis alaskensis (strain DSM 13593 / LMG 18877 / RB2256) (Sphingomonas alaskensis).